A 233-amino-acid polypeptide reads, in one-letter code: ATP synthase subunit a (233 aa).

The next 5 membrane-spanning stretches (helical) occupy residues 29-49, 86-106, 118-135, 188-208, and 209-229; these read FKHV…GLIV, VFPL…LGLV, TNAA…YQGL, VLFF…LFLL, and GKVL…KGAF.

It belongs to the ATPase A chain family. As to quaternary structure, F-type ATPases have 2 components, CF(1) - the catalytic core - and CF(0) - the membrane proton channel. CF(1) has five subunits: alpha(3), beta(3), gamma(1), delta(1), epsilon(1). CF(0) has three main subunits: a(1), b(2) and c(9-12). The alpha and beta chains form an alternating ring which encloses part of the gamma chain. CF(1) is attached to CF(0) by a central stalk formed by the gamma and epsilon chains, while a peripheral stalk is formed by the delta and b chains.

Its subcellular location is the cell inner membrane. In terms of biological role, key component of the proton channel; it plays a direct role in the translocation of protons across the membrane. This is ATP synthase subunit a from Nitratidesulfovibrio vulgaris (strain ATCC 29579 / DSM 644 / CCUG 34227 / NCIMB 8303 / VKM B-1760 / Hildenborough) (Desulfovibrio vulgaris).